We begin with the raw amino-acid sequence, 270 residues long: uncharacterized protein (270 aa).

Positions 34–266 (LIARGLTKSY…PDVRRLYLGD (233 aa)) constitute an ABC transporter domain. Position 66 to 73 (66 to 73 (GPNGAGKT)) interacts with ATP.

Belongs to the ABC transporter superfamily.

This is an uncharacterized protein from Rhizobium meliloti (strain 1021) (Ensifer meliloti).